Consider the following 253-residue polypeptide: 5-oxoprolinase subunit A (253 aa).

Belongs to the LamB/PxpA family. Forms a complex composed of PxpA, PxpB and PxpC.

It carries out the reaction 5-oxo-L-proline + ATP + 2 H2O = L-glutamate + ADP + phosphate + H(+). Catalyzes the cleavage of 5-oxoproline to form L-glutamate coupled to the hydrolysis of ATP to ADP and inorganic phosphate. This chain is 5-oxoprolinase subunit A, found in Bacillus cereus (strain B4264).